A 329-amino-acid polypeptide reads, in one-letter code: Cathepsin K (329 aa).

The N-terminal stretch at 1 to 15 is a signal peptide; that stretch reads MWGLKVLLLPVVSFA. The propeptide at 16-114 is activation peptide; that stretch reads LYPEEILDTH…TLYIPEWEGR (99 aa). N103 carries N-linked (GlcNAc...) asparagine glycosylation. Intrachain disulfides connect C136–C177, C170–C210, and C269–C318. Residue C139 is part of the active site. Active-site residues include H276 and N296.

It belongs to the peptidase C1 family. As to expression, predominantly expressed in osteoclasts (bones). Expressed in thyroid epithelial cells.

It is found in the lysosome. The protein localises to the secreted. It localises to the apical cell membrane. It carries out the reaction Broad proteolytic activity. With small-molecule substrates and inhibitors, the major determinant of specificity is P2, which is preferably Leu, Met &gt; Phe, and not Arg.. Functionally, thiol protease involved in osteoclastic bone resorption and may participate partially in the disorder of bone remodeling. Displays potent endoprotease activity against fibrinogen at acid pH. May play an important role in extracellular matrix degradation. Involved in the release of thyroid hormone thyroxine (T4) by limited proteolysis of TG/thyroglobulin in the thyroid follicle lumen. This is Cathepsin K (CTSK) from Homo sapiens (Human).